A 1496-amino-acid chain; its full sequence is Chromosome partition protein MukB (1496 aa).

63–70 (GGNGAGKS) is a binding site for ATP. 2 coiled-coil regions span residues 328 to 493 (KLEL…QRLS) and 536 to 632 (KMQA…APAW). The flexible hinge stretch occupies residues 694-811 (PDGSDDVRLN…EVPLFGRAAR (118 aa)). 2 coiled-coil regions span residues 861–1171 (NPEE…SAEE) and 1235–1291 (IDAI…LQNI). Over residues 1082–1091 (RARSRRDELQ) the composition is skewed to basic and acidic residues. Residues 1082 to 1101 (RARSRRDELQQRLSQQRSRK) form a disordered region.

Belongs to the SMC family. MukB subfamily. Homodimerization via its hinge domain. Binds to DNA via its C-terminal region. Interacts, and probably forms a ternary complex, with MukE and MukF via its C-terminal region. The complex formation is stimulated by calcium or magnesium. Interacts with tubulin-related protein FtsZ.

It localises to the cytoplasm. The protein resides in the nucleoid. Plays a central role in chromosome condensation, segregation and cell cycle progression. Functions as a homodimer, which is essential for chromosome partition. Involved in negative DNA supercoiling in vivo, and by this means organize and compact chromosomes. May achieve or facilitate chromosome segregation by condensation DNA from both sides of a centrally located replisome during cell division. This Actinobacillus pleuropneumoniae serotype 7 (strain AP76) protein is Chromosome partition protein MukB.